The chain runs to 307 residues: Glycine--tRNA ligase alpha subunit (307 aa).

The protein belongs to the class-II aminoacyl-tRNA synthetase family. As to quaternary structure, tetramer of two alpha and two beta subunits.

It is found in the cytoplasm. It carries out the reaction tRNA(Gly) + glycine + ATP = glycyl-tRNA(Gly) + AMP + diphosphate. The protein is Glycine--tRNA ligase alpha subunit of Aeromonas salmonicida (strain A449).